We begin with the raw amino-acid sequence, 258 residues long: Hydroxyacylglutathione hydrolase (258 aa).

The Zn(2+) site is built by histidine 54, histidine 56, aspartate 58, histidine 59, histidine 113, aspartate 138, and histidine 176.

Belongs to the metallo-beta-lactamase superfamily. Glyoxalase II family. In terms of assembly, monomer. The cofactor is Zn(2+).

The catalysed reaction is an S-(2-hydroxyacyl)glutathione + H2O = a 2-hydroxy carboxylate + glutathione + H(+). Its pathway is secondary metabolite metabolism; methylglyoxal degradation; (R)-lactate from methylglyoxal: step 2/2. Thiolesterase that catalyzes the hydrolysis of S-D-lactoyl-glutathione to form glutathione and D-lactic acid. The polypeptide is Hydroxyacylglutathione hydrolase (Synechococcus sp. (strain ATCC 27144 / PCC 6301 / SAUG 1402/1) (Anacystis nidulans)).